The following is a 234-amino-acid chain: Probable glycerol uptake facilitator protein (234 aa).

Transmembrane regions (helical) follow at residues 3-23 (VYLA…GVVA) and 36-56 (GWIV…YLVG). Residues 64–66 (NPA) carry the NPA 1 motif. 3 consecutive transmembrane segments (helical) span residues 82 to 102 (VPGY…LVYL), 134 to 154 (LLTE…IGAN), and 164 to 184 (LVGF…GYAI). An NPA 2 motif is present at residues 185–187 (NPA). Residues 214–234 (VPIIGPIIGGILGASLYNWLF) traverse the membrane as a helical segment.

The protein belongs to the MIP/aquaporin (TC 1.A.8) family.

The protein localises to the cell membrane. It carries out the reaction glycerol(in) = glycerol(out). Mediates glycerol diffusion across the cytoplasmic membrane via a pore-type mechanism. The polypeptide is Probable glycerol uptake facilitator protein (glpF) (Thermotoga maritima (strain ATCC 43589 / DSM 3109 / JCM 10099 / NBRC 100826 / MSB8)).